The following is a 449-amino-acid chain: Required for meiotic nuclear division protein 1 homolog (449 aa).

The transit peptide at 1–16 (MPATLLRAVAGSHRVL) directs the protein to the mitochondrion.

It belongs to the RMD1/sif2 family. As to quaternary structure, homooligomer.

Its subcellular location is the mitochondrion. Its function is as follows. Required for mitochondrial translation, possibly by coordinating the assembly or maintenance of the mitochondrial ribosome. This Pongo abelii (Sumatran orangutan) protein is Required for meiotic nuclear division protein 1 homolog (RMND1).